A 544-amino-acid polypeptide reads, in one-letter code: Transcription factor bHLH119 (544 aa).

2 disordered regions span residues 12 to 59 (NGQV…QPPR) and 185 to 208 (VASTSATRPQSSASLAPTPPPPSV). Over residues 15 to 29 (VVRTSQPQRPSSGKP) the composition is skewed to polar residues. The segment covering 50–59 (LPLPLLQPPR) has biased composition (pro residues). The residue at position 269 (threonine 269) is a Phosphothreonine. A Phosphoserine modification is found at serine 274. Disordered regions lie at residues 342–364 (QGTEEAHGSTSRKRSRAADMHNL) and 522–544 (QPPLPLQGQPTSQPSFSHASTSK). In terms of domain architecture, bHLH spans 357–406 (RAADMHNLSERRRRERINERMKTLQELLPRCRKTDKVSMLEDVIEYVKSL). Low complexity predominate over residues 522–535 (QPPLPLQGQPTSQP). Phosphoserine is present on residues serine 541 and serine 543.

In terms of assembly, homodimer.

It is found in the nucleus. The chain is Transcription factor bHLH119 (BHLH119) from Arabidopsis thaliana (Mouse-ear cress).